Reading from the N-terminus, the 675-residue chain is 1,4-alpha-glucan branching enzyme TK1436 (675 aa).

The active-site Nucleophile is the E183. Substrate is bound by residues R261 and G278. Catalysis depends on D354, which acts as the Proton donor. Substrate-binding residues include W407, D467, and Q476. Disordered stretches follow at residues 537-563 (PELE…KVLT) and 581-627 (EETR…LSIK). 2 stretches are compositionally biased toward basic and acidic residues: residues 549-563 (PPEK…KVLT) and 581-595 (EETR…EASK). The span at 596 to 616 (RGKRKSSKSKRLPRKVSKKAP) shows a compositional bias: basic residues.

Belongs to the glycosyl hydrolase 57 family. As to quaternary structure, monomer.

It carries out the reaction Transfers a segment of a (1-&gt;4)-alpha-D-glucan chain to a primary hydroxy group in a similar glucan chain.. Catalyzes the formation of branch points in alpha-glucans by cleavage of an alpha-1,4 glycosidic bond and subsequent transfer of the cleaved-off oligosaccharide to a new alpha-1,6 position. The branch chain-length distribution of the reaction products shows degree of polymerization (DP) of 5 to 30, with two local maxima at DP 6 and DP 11. Exhibits an alpha-retaining catalytic mechanism. Does not display alpha-galactosidase or pullulanase activity, since melibiose and pullulan are not substrates. Is not able to catalyze the hydrolysis or transglycosylation of maltoheptaose, suggesting that the TK1436 protein contains neither alpha-amylase nor 4-alpha-glucanotransferase activity. In Thermococcus kodakarensis (strain ATCC BAA-918 / JCM 12380 / KOD1) (Pyrococcus kodakaraensis (strain KOD1)), this protein is 1,4-alpha-glucan branching enzyme TK1436.